The following is a 949-amino-acid chain: Bifunctional glutamine synthetase adenylyltransferase/adenylyl-removing enzyme (949 aa).

The tract at residues 1–450 (MQNQGNKVLS…HFNATVGGTD (450 aa)) is adenylyl removase. The tract at residues 455-949 (NDHWTALFWN…IEIYNEILAI (495 aa)) is adenylyl transferase.

The protein belongs to the GlnE family. The cofactor is Mg(2+).

The catalysed reaction is [glutamine synthetase]-O(4)-(5'-adenylyl)-L-tyrosine + phosphate = [glutamine synthetase]-L-tyrosine + ADP. It carries out the reaction [glutamine synthetase]-L-tyrosine + ATP = [glutamine synthetase]-O(4)-(5'-adenylyl)-L-tyrosine + diphosphate. Its function is as follows. Involved in the regulation of glutamine synthetase GlnA, a key enzyme in the process to assimilate ammonia. When cellular nitrogen levels are high, the C-terminal adenylyl transferase (AT) inactivates GlnA by covalent transfer of an adenylyl group from ATP to specific tyrosine residue of GlnA, thus reducing its activity. Conversely, when nitrogen levels are low, the N-terminal adenylyl removase (AR) activates GlnA by removing the adenylyl group by phosphorolysis, increasing its activity. The regulatory region of GlnE binds the signal transduction protein PII (GlnB) which indicates the nitrogen status of the cell. The chain is Bifunctional glutamine synthetase adenylyltransferase/adenylyl-removing enzyme from Shewanella frigidimarina (strain NCIMB 400).